Reading from the N-terminus, the 415-residue chain is Actin-like protein 7B (415 aa).

A disordered region spans residues 1–35 (MATRNSPMALGTAQGDPGEAGTRPGSDAGLRDTGA). Phosphoserine is present on Ser6.

This sequence belongs to the actin family.

It localises to the cytoplasm. The protein resides in the cytoskeleton. The polypeptide is Actin-like protein 7B (ACTL7B) (Macaca fascicularis (Crab-eating macaque)).